We begin with the raw amino-acid sequence, 237 residues long: DNA repair protein RecO (237 aa).

The protein belongs to the RecO family.

In terms of biological role, involved in DNA repair and RecF pathway recombination. This Cereibacter sphaeroides (strain ATCC 17025 / ATH 2.4.3) (Rhodobacter sphaeroides) protein is DNA repair protein RecO.